The following is a 357-amino-acid chain: 3-isopropylmalate dehydrogenase (357 aa).

Gly76–Glu89 lines the NAD(+) pocket. 4 residues coordinate substrate: Arg96, Arg106, Arg135, and Asp224. 3 residues coordinate Mg(2+): Asp224, Asp248, and Asp252. Residue Gly282–Asn294 coordinates NAD(+).

The protein belongs to the isocitrate and isopropylmalate dehydrogenases family. LeuB type 1 subfamily. Homodimer. Mg(2+) serves as cofactor. The cofactor is Mn(2+).

It is found in the cytoplasm. The enzyme catalyses (2R,3S)-3-isopropylmalate + NAD(+) = 4-methyl-2-oxopentanoate + CO2 + NADH. The protein operates within amino-acid biosynthesis; L-leucine biosynthesis; L-leucine from 3-methyl-2-oxobutanoate: step 3/4. Its function is as follows. Catalyzes the oxidation of 3-carboxy-2-hydroxy-4-methylpentanoate (3-isopropylmalate) to 3-carboxy-4-methyl-2-oxopentanoate. The product decarboxylates to 4-methyl-2 oxopentanoate. This chain is 3-isopropylmalate dehydrogenase, found in Nitratidesulfovibrio vulgaris (strain ATCC 29579 / DSM 644 / CCUG 34227 / NCIMB 8303 / VKM B-1760 / Hildenborough) (Desulfovibrio vulgaris).